We begin with the raw amino-acid sequence, 39 residues long: Photosystem II reaction center protein L (39 aa).

A helical membrane pass occupies residues 18–38 (SLYLGLLLVFVLGILFSSYFF).

The protein belongs to the PsbL family. As to quaternary structure, PSII is composed of 1 copy each of membrane proteins PsbA, PsbB, PsbC, PsbD, PsbE, PsbF, PsbH, PsbI, PsbJ, PsbK, PsbL, PsbM, PsbT, PsbX, PsbY, PsbZ, Psb30/Ycf12, peripheral proteins PsbO, CyanoQ (PsbQ), PsbU, PsbV and a large number of cofactors. It forms dimeric complexes.

It is found in the cellular thylakoid membrane. One of the components of the core complex of photosystem II (PSII). PSII is a light-driven water:plastoquinone oxidoreductase that uses light energy to abstract electrons from H(2)O, generating O(2) and a proton gradient subsequently used for ATP formation. It consists of a core antenna complex that captures photons, and an electron transfer chain that converts photonic excitation into a charge separation. This subunit is found at the monomer-monomer interface and is required for correct PSII assembly and/or dimerization. The polypeptide is Photosystem II reaction center protein L (Trichormus variabilis (strain ATCC 29413 / PCC 7937) (Anabaena variabilis)).